The primary structure comprises 367 residues: Glutamate 5-kinase (367 aa).

Lys10 is a binding site for ATP. Residues Ser50, Asp137, and Asn149 each contribute to the substrate site. Residues 169–170 and 211–217 each bind ATP; these read TD and TGGMATK. Residues 275 to 353 form the PUA domain; the sequence is AGVIIVDNGA…QEISQILGYE (79 aa).

The protein belongs to the glutamate 5-kinase family.

The protein resides in the cytoplasm. It catalyses the reaction L-glutamate + ATP = L-glutamyl 5-phosphate + ADP. It participates in amino-acid biosynthesis; L-proline biosynthesis; L-glutamate 5-semialdehyde from L-glutamate: step 1/2. In terms of biological role, catalyzes the transfer of a phosphate group to glutamate to form L-glutamate 5-phosphate. In Proteus mirabilis (strain HI4320), this protein is Glutamate 5-kinase.